The primary structure comprises 402 residues: Galactoside 2-alpha-L-fucosyltransferase (402 aa).

Over 1–6 (MRYNSN) the chain is Cytoplasmic. Residues 7–27 (YLMYFCLVLGIFANIYVIIKI) form a helical; Signal-anchor for type II membrane protein membrane-spanning segment. Over 28–402 (TLGSSHILEY…TDLNGKISKY (375 aa)) the chain is Lumenal. Residues Asn-119, Asn-175, and Asn-301 are each glycosylated (N-linked (GlcNAc...) asparagine).

It belongs to the glycosyltransferase 11 family. May form oligomers. In terms of processing, N-glycosylated. As to expression, expression is restricted to pharyngeal neurons and gland cells.

The protein resides in the golgi apparatus. Its subcellular location is the golgi stack membrane. It participates in protein modification; protein glycosylation. Its function is as follows. Selectively catalyzes the addition of fucose in alpha 1-2 linkage to Gal-beta-(1-&gt;3)-GalNAc-alpha-R, Gal-beta-(1-&gt;3)-(GlcNAc-beta-(1-&gt;6))-GalNAc-alpha-R and Gal-beta-(1-&gt;3)-GalNAc acceptors but not Gal-beta-(1-&gt;3)-GlcNAc-beta-(1-&gt;3)-Gal-beta-(1-&gt;4)-Glc in vitro. This Caenorhabditis elegans protein is Galactoside 2-alpha-L-fucosyltransferase.